The sequence spans 511 residues: ATP synthase subunit alpha, mitochondrial (511 aa).

171–178 is an ATP binding site; it reads GDRQTGKT.

The protein belongs to the ATPase alpha/beta chains family. As to quaternary structure, F-type ATPases have 2 components, CF(1) - the catalytic core - and CF(0) - the membrane proton channel. CF(1) has five subunits: alpha(3), beta(3), gamma(1), delta(1), epsilon(1). CF(0) has three main subunits: a, b and c.

It is found in the mitochondrion. The protein resides in the mitochondrion inner membrane. In terms of biological role, mitochondrial membrane ATP synthase (F(1)F(0) ATP synthase or Complex V) produces ATP from ADP in the presence of a proton gradient across the membrane which is generated by electron transport complexes of the respiratory chain. F-type ATPases consist of two structural domains, F(1) - containing the extramembraneous catalytic core, and F(0) - containing the membrane proton channel, linked together by a central stalk and a peripheral stalk. During catalysis, ATP synthesis in the catalytic domain of F(1) is coupled via a rotary mechanism of the central stalk subunits to proton translocation. Subunits alpha and beta form the catalytic core in F(1). Rotation of the central stalk against the surrounding alpha(3)beta(3) subunits leads to hydrolysis of ATP in three separate catalytic sites on the beta subunits. Subunit alpha does not bear the catalytic high-affinity ATP-binding sites. The chain is ATP synthase subunit alpha, mitochondrial (ATPA) from Oenothera biennis (German evening primrose).